The primary structure comprises 230 residues: Cytidylate kinase (230 aa).

Residue 12 to 20 (GPSGAGKGT) coordinates ATP.

This sequence belongs to the cytidylate kinase family. Type 1 subfamily.

It is found in the cytoplasm. The enzyme catalyses CMP + ATP = CDP + ADP. The catalysed reaction is dCMP + ATP = dCDP + ADP. The protein is Cytidylate kinase of Aeromonas salmonicida (strain A449).